A 201-amino-acid chain; its full sequence is dITP/XTP pyrophosphatase (201 aa).

7–12 (TNNKGK) contacts substrate. Glutamate 40 and aspartate 69 together coordinate Mg(2+). The active-site Proton acceptor is the aspartate 69. Residues serine 70, 152-155 (FGYD), lysine 175, and 180-181 (HR) each bind substrate.

This sequence belongs to the HAM1 NTPase family. In terms of assembly, homodimer. The cofactor is Mg(2+).

The catalysed reaction is XTP + H2O = XMP + diphosphate + H(+). The enzyme catalyses dITP + H2O = dIMP + diphosphate + H(+). It catalyses the reaction ITP + H2O = IMP + diphosphate + H(+). In terms of biological role, pyrophosphatase that catalyzes the hydrolysis of nucleoside triphosphates to their monophosphate derivatives, with a high preference for the non-canonical purine nucleotides XTP (xanthosine triphosphate), dITP (deoxyinosine triphosphate) and ITP. Seems to function as a house-cleaning enzyme that removes non-canonical purine nucleotides from the nucleotide pool, thus preventing their incorporation into DNA/RNA and avoiding chromosomal lesions. This Desulforamulus reducens (strain ATCC BAA-1160 / DSM 100696 / MI-1) (Desulfotomaculum reducens) protein is dITP/XTP pyrophosphatase.